The chain runs to 220 residues: ATP phosphoribosyltransferase (220 aa).

The protein belongs to the ATP phosphoribosyltransferase family. Short subfamily. Heteromultimer composed of HisG and HisZ subunits.

It is found in the cytoplasm. The catalysed reaction is 1-(5-phospho-beta-D-ribosyl)-ATP + diphosphate = 5-phospho-alpha-D-ribose 1-diphosphate + ATP. It functions in the pathway amino-acid biosynthesis; L-histidine biosynthesis; L-histidine from 5-phospho-alpha-D-ribose 1-diphosphate: step 1/9. Its function is as follows. Catalyzes the condensation of ATP and 5-phosphoribose 1-diphosphate to form N'-(5'-phosphoribosyl)-ATP (PR-ATP). Has a crucial role in the pathway because the rate of histidine biosynthesis seems to be controlled primarily by regulation of HisG enzymatic activity. The protein is ATP phosphoribosyltransferase of Anaeromyxobacter sp. (strain Fw109-5).